The chain runs to 206 residues: N-(5'-phosphoribosyl)anthranilate isomerase (206 aa).

The protein belongs to the TrpF family.

The enzyme catalyses N-(5-phospho-beta-D-ribosyl)anthranilate = 1-(2-carboxyphenylamino)-1-deoxy-D-ribulose 5-phosphate. It participates in amino-acid biosynthesis; L-tryptophan biosynthesis; L-tryptophan from chorismate: step 3/5. This is N-(5'-phosphoribosyl)anthranilate isomerase from Nitrosococcus oceani (strain ATCC 19707 / BCRC 17464 / JCM 30415 / NCIMB 11848 / C-107).